The primary structure comprises 84 residues: Cell division topological specificity factor (84 aa).

Belongs to the MinE family.

In terms of biological role, prevents the cell division inhibition by proteins MinC and MinD at internal division sites while permitting inhibition at polar sites. This ensures cell division at the proper site by restricting the formation of a division septum at the midpoint of the long axis of the cell. The polypeptide is Cell division topological specificity factor (Granulibacter bethesdensis (strain ATCC BAA-1260 / CGDNIH1)).